We begin with the raw amino-acid sequence, 808 residues long: Copal-8-ol diphosphate hydratase, chloroplastic (808 aa).

The transit peptide at 1–50 directs the protein to the chloroplast; it reads MAFTFTSAHLFLPVTENHSVHVNYSIPPGNWRLWSTAKGGSNKLDIRRLR. Residues 190–219 adopt a coiled-coil conformation; it reads DKCQKGLKFFRDNISKLEKENVEASAQMLS. Lys256 contributes to the substrate binding site. Mg(2+) is bound by residues Asp391 and Asp393. Positions 391 to 394 match the DXDD motif motif; sequence DLDD. Lys477 is a binding site for substrate.

It belongs to the terpene synthase family. Requires Mg(2+) as cofactor. In terms of tissue distribution, expressed in stems, leaves and trichomes. Not detected in roots and seeds. Higher expression in young leaves than in fully expanded leaves.

The protein localises to the plastid. Its subcellular location is the chloroplast. It catalyses the reaction (2E,6E,10E)-geranylgeranyl diphosphate + H2O = 8-hydroxycopalyl diphosphate. It functions in the pathway secondary metabolite biosynthesis; terpenoid biosynthesis. Its function is as follows. Involved in the biosynthesis of oxygen-containing labdane-type diterpenes that may be implicated in direct and indirect defense mechanisms. No activity with geranyl diphosphate or farnesyl diphosphate as substrate. This Cistus creticus subsp. creticus (Rock rose) protein is Copal-8-ol diphosphate hydratase, chloroplastic.